Consider the following 382-residue polypeptide: Vacuolar protein-sorting-associated protein 36 (382 aa).

The region spanning 1-88 (MDRFMWTNGL…SAKIVIHLHP (88 aa)) is the GLUE N-terminal domain. In terms of domain architecture, GLUE C-terminal spans 105–138 (YIKLSFKEHGQIEFYRRLTEEMTQKRWENTPVSQ). Residues 160 to 193 (ERKLEEKRKETDKNISEAFEDLSKLMEKAKEMVE) are a coiled coil.

The protein belongs to the VPS36 family. Component of the endosomal sorting complex required for transport II (ESCRT-II), composed of SNF8, VPS25 and VPS36.

It is found in the cytoplasm. The protein resides in the endosome. Functionally, component of the ESCRT-II complex (endosomal sorting complex required for transport II), which is required for multivesicular body (MVB) formation and sorting of endosomal cargo proteins into MVBs. The MVB pathway mediates delivery of transmembrane proteins into the lumen of the lysosome for degradation. The ESCRT-II complex is probably involved in the recruitment of the ESCRT-III complex. The protein is Vacuolar protein-sorting-associated protein 36 (vps36) of Danio rerio (Zebrafish).